The sequence spans 476 residues: Lactate utilization protein B (476 aa).

4Fe-4S ferredoxin-type domains lie at 304–334 (GTEF…GHSY) and 353–382 (YDDY…LHEL). [4Fe-4S] cluster is bound by residues cysteine 313, cysteine 316, cysteine 319, cysteine 323, cysteine 366, cysteine 369, and cysteine 373. Positions 440–476 (KGPGPLKAWTESREFPAPSKERFRDWFQTRQKGGNPS) are disordered. The segment covering 449–466 (TESREFPAPSKERFRDWF) has biased composition (basic and acidic residues). Positions 467 to 476 (QTRQKGGNPS) are enriched in polar residues.

The protein belongs to the LutB/YkgF family.

In terms of biological role, is involved in L-lactate degradation and allows cells to grow with lactate as the sole carbon source. Has probably a role as an electron transporter during oxidation of L-lactate. This is Lactate utilization protein B from Geobacillus kaustophilus (strain HTA426).